A 476-amino-acid polypeptide reads, in one-letter code: Aspartyl/glutamyl-tRNA(Asn/Gln) amidotransferase subunit B (476 aa).

This sequence belongs to the GatB/GatE family. GatB subfamily. In terms of assembly, heterotrimer of A, B and C subunits.

The enzyme catalyses L-glutamyl-tRNA(Gln) + L-glutamine + ATP + H2O = L-glutaminyl-tRNA(Gln) + L-glutamate + ADP + phosphate + H(+). The catalysed reaction is L-aspartyl-tRNA(Asn) + L-glutamine + ATP + H2O = L-asparaginyl-tRNA(Asn) + L-glutamate + ADP + phosphate + 2 H(+). Allows the formation of correctly charged Asn-tRNA(Asn) or Gln-tRNA(Gln) through the transamidation of misacylated Asp-tRNA(Asn) or Glu-tRNA(Gln) in organisms which lack either or both of asparaginyl-tRNA or glutaminyl-tRNA synthetases. The reaction takes place in the presence of glutamine and ATP through an activated phospho-Asp-tRNA(Asn) or phospho-Glu-tRNA(Gln). This is Aspartyl/glutamyl-tRNA(Asn/Gln) amidotransferase subunit B from Shouchella clausii (strain KSM-K16) (Alkalihalobacillus clausii).